Here is a 152-residue protein sequence, read N- to C-terminus: MSSKLEQLQALLAPVIEALGYQCWGIEFLSQGRHSLLRVYIDKADGILIDDCEIVSRQLSGVLDVEDPISSEYTLEVSSPGMDRPLFTLEQFAAHVGEQVKIKLRSPFEGRRNFQGLLRGVEEQDVVVQVDDHEYLLPIDLIDKANIIPRFD.

It belongs to the RimP family.

It is found in the cytoplasm. In terms of biological role, required for maturation of 30S ribosomal subunits. In Ectopseudomonas mendocina (strain ymp) (Pseudomonas mendocina), this protein is Ribosome maturation factor RimP.